The primary structure comprises 263 residues: Orotidine 5'-phosphate decarboxylase (263 aa).

Substrate contacts are provided by residues Asp-36, 58–60, 90–99, Tyr-216, and Arg-234; these read KTH and DRKFADIGNT. The active-site Proton donor is the Lys-92.

It belongs to the OMP decarboxylase family.

The enzyme catalyses orotidine 5'-phosphate + H(+) = UMP + CO2. Its pathway is pyrimidine metabolism; UMP biosynthesis via de novo pathway; UMP from orotate: step 2/2. The chain is Orotidine 5'-phosphate decarboxylase (URA3) from Komagataella pastoris (Yeast).